We begin with the raw amino-acid sequence, 338 residues long: MTTTTTTTTNTNTTNLDPLLPWVEKYRPILIKDIVGNEETVSRLESISKDGNLPNIIISGPPGTGKTSSILCLARALLGANYKEAVYELNASDDRTLDVVRDKIKSFAMKKVTLPAGRHKIIILDEVDSMTSGAQQALRRIMEIYSGTTRFAFACNQSTKIIEPIQSRCAVLRFTRLSDSQILTRLREVVQIEKVPYTDDGLAAIIFTAEGDMRQALNNLQATHSGFGLINAENVTKVCDQPHPLIIKQIIALCAKSDFKEAYPFLKKLWDDGYSSIDIISALFSITKSSNNIPEYQKLEFLKEIGFCNLRATTGVNTLVQLTGLLSKLCLVSIKMKN.

Position 60 to 67 (60 to 67) interacts with ATP; it reads GPPGTGKT.

Belongs to the activator 1 small subunits family. In terms of assembly, heteropentamer of various rfc subunits that forms a complex (RFC) with PCNA in the presence of ATP.

The protein resides in the nucleus. In terms of biological role, the elongation of primed DNA templates by DNA polymerase delta and epsilon requires the action of the accessory proteins PCNA and activator 1. This is Probable replication factor C subunit 2 (rfc2) from Dictyostelium discoideum (Social amoeba).